The primary structure comprises 318 residues: Aspartate carbamoyltransferase catalytic subunit (318 aa).

Residues arginine 59 and threonine 60 each coordinate carbamoyl phosphate. Lysine 87 is an L-aspartate binding site. Carbamoyl phosphate-binding residues include arginine 109, histidine 137, and glutamine 140. L-aspartate-binding residues include arginine 170 and arginine 224. Glycine 265 and proline 266 together coordinate carbamoyl phosphate.

Belongs to the aspartate/ornithine carbamoyltransferase superfamily. ATCase family. As to quaternary structure, heterododecamer (2C3:3R2) of six catalytic PyrB chains organized as two trimers (C3), and six regulatory PyrI chains organized as three dimers (R2).

It catalyses the reaction carbamoyl phosphate + L-aspartate = N-carbamoyl-L-aspartate + phosphate + H(+). It functions in the pathway pyrimidine metabolism; UMP biosynthesis via de novo pathway; (S)-dihydroorotate from bicarbonate: step 2/3. Functionally, catalyzes the condensation of carbamoyl phosphate and aspartate to form carbamoyl aspartate and inorganic phosphate, the committed step in the de novo pyrimidine nucleotide biosynthesis pathway. This Rhizobium rhizogenes (strain K84 / ATCC BAA-868) (Agrobacterium radiobacter) protein is Aspartate carbamoyltransferase catalytic subunit.